Reading from the N-terminus, the 367-residue chain is MKTSPHRNTSAIVDLKAIRNNIEKFKKHIHPNAEIWPAVKADAYGHGSVEVSKAVSDLVGGFCVSNLDEAIELRNHLVTKPILVLSGIVPEDVDIAAALNISLTAPSLEWLKLVVQEEAELSDLKIHIGVDSGMGRIGIRDVEEANQMIELADKYAINFEGIFTHFATADMADDTKFKDQQARFNKIMAGLSRKPKFVHSTNTAAALWHKEQVQAIERLGISMYGLNPSGKTLELPFEIEPALSLVSELTHIKKIAAGETVGYGATYETSEETWIGTVPIGYADGWTRQMQGFKVLVNGEFCEIVGRVCMDQMMIKLDKSYPLGTKVTLIGRDKTNEITTTDVADWRGTINYEVLCLLSDRIKRIYK.

Catalysis depends on lysine 40, which acts as the Proton acceptor; specific for D-alanine. Position 40 is an N6-(pyridoxal phosphate)lysine (lysine 40). Arginine 136 contributes to the substrate binding site. Tyrosine 263 acts as the Proton acceptor; specific for L-alanine in catalysis. Methionine 310 is a binding site for substrate.

It belongs to the alanine racemase family. Pyridoxal 5'-phosphate is required as a cofactor.

It carries out the reaction L-alanine = D-alanine. It participates in amino-acid biosynthesis; D-alanine biosynthesis; D-alanine from L-alanine: step 1/1. In terms of biological role, catalyzes the interconversion of L-alanine and D-alanine. May also act on other amino acids. The sequence is that of Alanine racemase (alr) from Lactococcus lactis subsp. lactis (strain IL1403) (Streptococcus lactis).